Reading from the N-terminus, the 90-residue chain is DNA-directed RNA polymerase subunit omega (90 aa).

A disordered region spans residues 69–90 (RQEQQEQEAAELAAVSSIAHTR).

Belongs to the RNA polymerase subunit omega family. The RNAP catalytic core consists of 2 alpha, 1 beta, 1 beta' and 1 omega subunit. When a sigma factor is associated with the core the holoenzyme is formed, which can initiate transcription.

The enzyme catalyses RNA(n) + a ribonucleoside 5'-triphosphate = RNA(n+1) + diphosphate. In terms of biological role, promotes RNA polymerase assembly. Latches the N- and C-terminal regions of the beta' subunit thereby facilitating its interaction with the beta and alpha subunits. This Vibrio atlanticus (strain LGP32) (Vibrio splendidus (strain Mel32)) protein is DNA-directed RNA polymerase subunit omega.